Consider the following 277-residue polypeptide: Undecaprenyl-diphosphatase (277 aa).

The next 6 helical transmembrane spans lie at 88-108 (MGWL…LFQD), 117-137 (MWIV…ADAV), 157-179 (FAQA…AGLL), 191-211 (SFLL…YKTV), 227-247 (LATV…LKFV), and 255-275 (FVWY…FNVI).

The protein belongs to the UppP family.

It is found in the cell membrane. It carries out the reaction di-trans,octa-cis-undecaprenyl diphosphate + H2O = di-trans,octa-cis-undecaprenyl phosphate + phosphate + H(+). Functionally, catalyzes the dephosphorylation of undecaprenyl diphosphate (UPP). Confers resistance to bacitracin. The protein is Undecaprenyl-diphosphatase of Paenarthrobacter aurescens (strain TC1).